Consider the following 439-residue polypeptide: D-inositol 3-phosphate glycosyltransferase (439 aa).

H21 provides a ligand contact to 1D-myo-inositol 3-phosphate. UDP-N-acetyl-alpha-D-glucosamine-binding positions include 27–28 (QP) and G35. 1D-myo-inositol 3-phosphate-binding positions include 32-37 (DAGGMN), K90, Y123, T147, and R167. R241, K246, and Q299 together coordinate UDP-N-acetyl-alpha-D-glucosamine. Y308, R309, and A311 together coordinate Mg(2+). E321 and E329 together coordinate UDP-N-acetyl-alpha-D-glucosamine. Residue T335 coordinates Mg(2+).

Belongs to the glycosyltransferase group 1 family. MshA subfamily. Homodimer.

It catalyses the reaction 1D-myo-inositol 3-phosphate + UDP-N-acetyl-alpha-D-glucosamine = 1D-myo-inositol 2-acetamido-2-deoxy-alpha-D-glucopyranoside 3-phosphate + UDP + H(+). In terms of biological role, catalyzes the transfer of a N-acetyl-glucosamine moiety to 1D-myo-inositol 3-phosphate to produce 1D-myo-inositol 2-acetamido-2-deoxy-glucopyranoside 3-phosphate in the mycothiol biosynthesis pathway. The chain is D-inositol 3-phosphate glycosyltransferase from Mycobacterium sp. (strain KMS).